The chain runs to 420 residues: Serine hydroxymethyltransferase (420 aa).

Residues Leu-118 and 122–124 (GHL) contribute to the (6S)-5,6,7,8-tetrahydrofolate site. Residue Lys-227 is modified to N6-(pyridoxal phosphate)lysine.

This sequence belongs to the SHMT family. As to quaternary structure, homodimer. Pyridoxal 5'-phosphate serves as cofactor.

It is found in the cytoplasm. The catalysed reaction is (6R)-5,10-methylene-5,6,7,8-tetrahydrofolate + glycine + H2O = (6S)-5,6,7,8-tetrahydrofolate + L-serine. It functions in the pathway one-carbon metabolism; tetrahydrofolate interconversion. The protein operates within amino-acid biosynthesis; glycine biosynthesis; glycine from L-serine: step 1/1. Catalyzes the reversible interconversion of serine and glycine with tetrahydrofolate (THF) serving as the one-carbon carrier. This reaction serves as the major source of one-carbon groups required for the biosynthesis of purines, thymidylate, methionine, and other important biomolecules. Also exhibits THF-independent aldolase activity toward beta-hydroxyamino acids, producing glycine and aldehydes, via a retro-aldol mechanism. The sequence is that of Serine hydroxymethyltransferase from Persephonella marina (strain DSM 14350 / EX-H1).